We begin with the raw amino-acid sequence, 169 residues long: Anaerobic nitrite reductase NSHB2 (169 aa).

A Globin domain is found at 16-166 (SFSEEQEALV…LVAAIKQEMK (151 aa)). Residues 49–53 (EVAPS) carry the Homodimerization motif. S59, K73, H77, R107, T111, and H112 together coordinate heme b. Positions 119–131 (DAHFEVTRFALLE) match the Homodimerization motif.

It belongs to the plant globin family. As to quaternary structure, homodimer. Requires heme b as cofactor. In terms of tissue distribution, expressed in leaves, but not in roots. Present in embryonic organs including embryos, coleoptiles and seminal roots.

It is found in the cytoplasm. Its subcellular location is the nucleus. The enzyme catalyses Fe(III)-heme b-[protein] + nitric oxide + H2O = Fe(II)-heme b-[protein] + nitrite + 2 H(+). Its function is as follows. Phytoglobin that reduces nitrite to nitric oxide under anoxic conditions (e.g. during flooding or in waterlogged soil). May not function as an oxygen storage or transport protein. Has an unusually high affinity for O(2) through an hexacoordinate heme iron because of a very low dissociation constant. Promotes tolerance to low potassium K(+) conditions. The sequence is that of Anaerobic nitrite reductase NSHB2 from Oryza sativa subsp. japonica (Rice).